A 560-amino-acid chain; its full sequence is Membrane protein insertase YidC (560 aa).

A helical membrane pass occupies residues 1-21 (MDIKRTILIAALAVVSYVMVL). A disordered region spans residues 42 to 66 (VAPGLPDGVPAGNNGASADVPSANA). 5 consecutive transmembrane segments (helical) span residues 341 to 361 (LELTVDYGFLWFIAQPIFWLL), 367 to 387 (LLGNWGWSIIVLTMLIKGLFF), 437 to 457 (LGGCLPILVQMPVFLALYWVL), 468 to 488 (WILWITDLSIKDPFFILPIIM), and 515 to 535 (PIIFTFFFLWFPAGLVLYWVV).

Belongs to the OXA1/ALB3/YidC family. Type 1 subfamily. As to quaternary structure, interacts with the Sec translocase complex via SecD. Specifically interacts with transmembrane segments of nascent integral membrane proteins during membrane integration.

The protein resides in the cell inner membrane. Required for the insertion and/or proper folding and/or complex formation of integral membrane proteins into the membrane. Involved in integration of membrane proteins that insert both dependently and independently of the Sec translocase complex, as well as at least some lipoproteins. Aids folding of multispanning membrane proteins. The chain is Membrane protein insertase YidC from Pseudomonas putida (strain ATCC 47054 / DSM 6125 / CFBP 8728 / NCIMB 11950 / KT2440).